The chain runs to 464 residues: MPVDLSTTLSWKSATGEAATMLDELQPNILKAHVRDRLTVLFLGFGDAAEARTFLNGLSGLMKSARTHLQEVEAHKLTKAVGTPYLGVGLTAHGYATLGVTAPADPSFTAGAKAAVEKLADPAVTEWEGHYQQTIDAVLLLGDATAGPVRTLRRQVEALRPASVTVVGEESGLGLANANGDGIEHFGYVDGRSQPLFLTEDVDAERDTTDGVNDWDPSAPLEQVLVPDPAAPDPTVHFGSYFVFRKLEQNVRLFKEAERDLAHDLGLRGEDRERAGAMLVGRFEDGTPLTAQSAPGSHHPVGNDFSYDSDKLGQKCPFHAHIRKTNPRGSGGAEAPEEERKHLMARRGQTYGRRHDDPNADLPPRLRPAKDVGLLFMAFNSNLGNQFEFTQQIWANNPAFPFPPDGSQPGLDPVIGQGARAPQKYAPEWGHNNVAEATDPIPQAVTMKGGEYFFMPSLAFLRSL.

Asp203 acts as the Proton acceptor in catalysis. Residues Glu258, Glu273, and Glu284 each contribute to the Mn(2+) site. His321 provides a ligand contact to heme.

The protein belongs to the DyP-type peroxidase family. As to quaternary structure, exists both as a monomeric and oligomeric species in solution; the monomeric form contains no bound heme cofactor and is inactive. It depends on heme b as a cofactor. Mn(2+) serves as cofactor.

The protein resides in the secreted. The catalysed reaction is 1-(4-hydroxy-3-methoxyphenyl)-2-(2-methoxyphenoxy)propane-1,3-diol + H2O2 = guaiacol + vanillin + glycolaldehyde + H2O. It carries out the reaction 2 Mn(2+) + H2O2 + 2 H(+) = 2 Mn(3+) + 2 H2O. It catalyses the reaction 2 a phenolic donor + H2O2 = 2 a phenolic radical donor + 2 H2O. The enzyme catalyses Reactive Blue 5 + 2 H2O2 = 2,2'-disulfonyl azobenzene + 3-[(4-amino-6-chloro-1,3,5-triazin-2-yl)amino]benzenesulfonate + phthalate + 2 H2O + 2 H(+). Displays both high peroxidase and manganese peroxidase activity. Is likely involved in lignin degradation. Also has a Mn-dependent oxidase mode of action that expands its substrate scope in vitro; is thus able to catalyze the O(2)- and Mn-dependent oxidative decarboxylation of 4-methoxymandelate to anisaldehyde. The chain is Multifunctional dye peroxidase DyP2 from Amycolatopsis sp. (strain ATCC 39116 / 75iv2).